Consider the following 382-residue polypeptide: V-type proton ATPase subunit C 1 (382 aa).

The residue at position 2 (Thr-2) is an N-acetylthreonine.

It belongs to the V-ATPase C subunit family. As to quaternary structure, V-ATPase is a heteromultimeric enzyme made up of two complexes: the ATP-hydrolytic V1 complex and the proton translocation V0 complex. The V1 complex consists of three catalytic AB heterodimers that form a heterohexamer, three peripheral stalks each consisting of EG heterodimers, one central rotor including subunits D and F, and the regulatory subunits C and H. The proton translocation complex V0 consists of the proton transport subunit a, a ring of proteolipid subunits c9c'', rotary subunit d, subunits e and f, and the accessory subunits ATP6AP1/Ac45 and ATP6AP2/PRR.

The protein localises to the cytoplasmic vesicle. Its subcellular location is the secretory vesicle. It localises to the synaptic vesicle membrane. The protein resides in the clathrin-coated vesicle membrane. Its function is as follows. Subunit of the V1 complex of vacuolar(H+)-ATPase (V-ATPase), a multisubunit enzyme composed of a peripheral complex (V1) that hydrolyzes ATP and a membrane integral complex (V0) that translocates protons. V-ATPase is responsible for acidifying and maintaining the pH of intracellular compartments and in some cell types, is targeted to the plasma membrane, where it is responsible for acidifying the extracellular environment. Subunit C is necessary for the assembly of the catalytic sector of the enzyme and is likely to have a specific function in its catalytic activity. In Macaca fascicularis (Crab-eating macaque), this protein is V-type proton ATPase subunit C 1 (ATP6V1C1).